The chain runs to 374 residues: Phosphate-binding protein PstS1 (374 aa).

The first 23 residues, 1–23, serve as a signal peptide directing secretion; that stretch reads MKIRLHTLLAVLTAAPLLLAAAG. The N-palmitoyl cysteine moiety is linked to residue Cys-24. Cys-24 is lipidated: S-diacylglycerol cysteine. The tract at residues 25 to 48 is disordered; it reads GSKPPSGSPETGAGAGTVATTPAS. Phosphate contacts are provided by residues 58 to 60, Ser-88, Asp-106, and 189 to 191; these read STL and SGD.

It belongs to the PstS family. The complex is composed of two ATP-binding proteins (PstB), two transmembrane proteins (PstC and PstA) and a solute-binding protein (PstS).

It is found in the cell membrane. The protein localises to the secreted. Functionally, functions in inorganic phosphate uptake, a phosphate-binding protein, although probably not the main uptake protein under phosphate starvation. Part of the ABC transporter complex PstSACB involved in phosphate import. A host TLR2 agonist (toll-like receptor), requires both host TLR1 and TLR2 as coreceptors. The sequence is that of Phosphate-binding protein PstS1 (pstS1) from Mycobacterium bovis (strain BCG / Pasteur 1173P2).